The sequence spans 275 residues: 2-dehydro-3-deoxyphosphooctonate aldolase (275 aa).

Belongs to the KdsA family.

It is found in the cytoplasm. It catalyses the reaction D-arabinose 5-phosphate + phosphoenolpyruvate + H2O = 3-deoxy-alpha-D-manno-2-octulosonate-8-phosphate + phosphate. The protein operates within carbohydrate biosynthesis; 3-deoxy-D-manno-octulosonate biosynthesis; 3-deoxy-D-manno-octulosonate from D-ribulose 5-phosphate: step 2/3. It participates in bacterial outer membrane biogenesis; lipopolysaccharide biosynthesis. The protein is 2-dehydro-3-deoxyphosphooctonate aldolase of Protochlamydia amoebophila (strain UWE25).